The following is a 475-amino-acid chain: Putative aldehyde dehydrogenase (475 aa).

Residues 146 to 147 and 223 to 224 each bind NAD(+); these read WN and GS. The active-site Proton acceptor is the glutamate 245. Leucine 246 contributes to the NAD(+) binding site. Residue cysteine 279 is the Nucleophile of the active site. Glutamate 379 contributes to the NAD(+) binding site.

This sequence belongs to the aldehyde dehydrogenase family.

It catalyses the reaction an aldehyde + NAD(+) + H2O = a carboxylate + NADH + 2 H(+). This chain is Putative aldehyde dehydrogenase, found in Staphylococcus aureus (strain MSSA476).